Reading from the N-terminus, the 180-residue chain is Large ribosomal subunit protein eL18 (180 aa).

Residues phenylalanine 152–alanine 180 form a disordered region. Basic and acidic residues predominate over residues lysine 170–alanine 180.

This sequence belongs to the eukaryotic ribosomal protein eL18 family.

The protein localises to the cytoplasm. This is Large ribosomal subunit protein eL18 (RPL18) from Taenia asiatica (Asian tapeworm).